Here is a 162-residue protein sequence, read N- to C-terminus: Transcription antitermination protein RfaH (162 aa).

It belongs to the RfaH family. As to quaternary structure, interacts with both the nontemplate DNA and the RNA polymerase (RNAP). Monomer in solution.

Its function is as follows. Enhances distal genes transcription elongation in a specialized subset of operons that encode extracytoplasmic components. RfaH is recruited into a multi-component RNA polymerase complex by the ops element, which is a short conserved DNA sequence located downstream of the main promoter of these operons. Once bound, RfaH suppresses pausing and inhibits Rho-dependent and intrinsic termination at a subset of sites. Termination signals are bypassed, which allows complete synthesis of long RNA chains. Enhances expression of several operons involved in synthesis of lipopolysaccharides, exopolysaccharides, hemolysin, and sex factor. Also negatively controls expression and surface presentation of AG43 and possibly another AG43-independent factor that mediates cell-cell interactions and biofilm formation. The protein is Transcription antitermination protein RfaH of Escherichia coli (strain K12).